A 317-amino-acid chain; its full sequence is Membrane-associated protein VIPP1, chloroplastic (317 aa).

The stretch at 92–246 (EMNDDLTKMR…SQAEALGQLA (155 aa)) forms a coiled coil. Positions 265-317 (DLAQMKKEISGSSSKGELPPGRTAVSNSGAARPFRDIEIENELNELRKKANEY) are disordered. A compositionally biased stretch (basic and acidic residues) spans 297–317 (PFRDIEIENELNELRKKANEY).

It belongs to the PspA/Vipp/IM30 family. Homomultimer. Complex formation involves interaction via the central alpha-helical domain (71-286). In terms of assembly, (Microbial infection) Interacts with the rice tungro bacilliform virus (RTBV) capsid protein.

The protein resides in the plastid. Its subcellular location is the chloroplast inner membrane. It is found in the chloroplast thylakoid membrane. Required for plastid vesicle formation and thylakoid membrane biogenesis, but not for functional assembly of thylakoid protein complexes. This chain is Membrane-associated protein VIPP1, chloroplastic, found in Oryza sativa subsp. japonica (Rice).